The following is a 308-amino-acid chain: Regulating synaptic membrane exocytosis protein 3 (308 aa).

The tract at residues Ser-86–Thr-120 is disordered. Low complexity predominate over residues Asp-109–Thr-120. The C2 domain occupies Pro-156 to Tyr-274. 2 positions are modified to phosphoserine: Ser-295 and Ser-298.

In terms of assembly, binds PPFIA3. Does not bind RAB3.

It localises to the synapse. Functionally, regulates synaptic membrane exocytosis. The sequence is that of Regulating synaptic membrane exocytosis protein 3 (RIMS3) from Homo sapiens (Human).